The sequence spans 329 residues: MSFFKKLKEKITKQTDSVSEKFKDGLEKTRNSFQNKVNDLVSRYRKVDEDFFEELEEVLISADVGFTTVMELIDELKKEVKRRNIQDPKEVQSVISEKLVEIYNSGDEQISELNIQDGRLNVILLVGVNGVGKTTTIGKLAHKMKQEGKSVVLAAGDTFRAGAIEQLEVWGERTGVPVIKQTAGSDPAAVIYDAVHAAKARNADVLICDTAGRLQNKVNLMKELEKVKRVIEREVPEAPHEVLLALDATTGQNAMAQAKEFSKATNVTGIALTKLDGTAKGGIVLAIRNELHIPVKLVGLGEKVDDLQEFDPESYVYGLFSDLVEKADD.

GTP is bound by residues 127 to 134 (GVNGVGKT), 209 to 213 (DTAGR), and 273 to 276 (TKLD).

This sequence belongs to the GTP-binding SRP family. FtsY subfamily. In terms of assembly, part of the signal recognition particle protein translocation system, which is composed of SRP and FtsY.

Its subcellular location is the cell membrane. The protein resides in the cytoplasm. It carries out the reaction GTP + H2O = GDP + phosphate + H(+). Its function is as follows. Involved in targeting and insertion of nascent membrane proteins into the cytoplasmic membrane. Acts as a receptor for the complex formed by the signal recognition particle (SRP) and the ribosome-nascent chain (RNC). In Bacillus subtilis (strain 168), this protein is Signal recognition particle receptor FtsY.